The chain runs to 192 residues: Ion-translocating oxidoreductase complex subunit A (192 aa).

A run of 6 helical transmembrane segments spans residues 5–25, 39–59, 65–85, 102–122, 134–154, and 171–191; these read LLLL…FLGL, IGMS…SYLV, LPFE…AVVV, ALGI…VALL, AIYG…FSAM, and AIAM…TGLV.

It belongs to the NqrDE/RnfAE family. As to quaternary structure, the complex is composed of six subunits: RnfA, RnfB, RnfC, RnfD, RnfE and RnfG.

The protein resides in the cell inner membrane. Functionally, part of a membrane-bound complex that couples electron transfer with translocation of ions across the membrane. This chain is Ion-translocating oxidoreductase complex subunit A, found in Shewanella sediminis (strain HAW-EB3).